The primary structure comprises 90 residues: WAP four-disulfide core domain protein 12 (90 aa).

The signal sequence occupies residues 1-23 (MGSSSFLVLMVSLALVTLVAVEG). The WAP domain maps to 27-74 (GIEKAGVCPADNVRCFKSDPPQCHTDQDCLGERKCCYLHCGFKCVIPV). 4 cysteine pairs are disulfide-bonded: Cys-34-Cys-62, Cys-41-Cys-66, Cys-49-Cys-61, and Cys-55-Cys-70.

Its subcellular location is the secreted. In terms of biological role, antibacterial protein. Putative acid-stable proteinase inhibitor. In Pongo abelii (Sumatran orangutan), this protein is WAP four-disulfide core domain protein 12 (WFDC12).